A 438-amino-acid polypeptide reads, in one-letter code: Transmembrane protease serine 11F (438 aa).

At 1–32 (MMYAPVEFSEAEFSRAEYQRKQQFWDSVRLAL) the chain is on the cytoplasmic side. A helical; Signal-anchor for type II membrane protein transmembrane segment spans residues 33-53 (FTLAIVAIIGIAIGIVTHFVV). Topologically, residues 54-438 (EDDKSFYYLA…RDWIASKTGM (385 aa)) are extracellular. Positions 57–175 (KSFYYLASFK…PSFRLTPIDS (119 aa)) constitute an SEA domain. The Peptidase S1 domain maps to 206-437 (IVQGRETAME…YRDWIASKTG (232 aa)). An intrachain disulfide couples Cys233 to Cys249. Active-site charge relay system residues include His248 and Asp293. 2 cysteine pairs are disulfide-bonded: Cys358–Cys374 and Cys385–Cys413. Ser389 functions as the Charge relay system in the catalytic mechanism.

It belongs to the peptidase S1 family.

It is found in the membrane. Probable serine protease. In Homo sapiens (Human), this protein is Transmembrane protease serine 11F (TMPRSS11F).